Here is a 228-residue protein sequence, read N- to C-terminus: Small ribosomal subunit protein uS3 (228 aa).

Positions 39–107 constitute a KH type-2 domain; the sequence is TREYLQDKLK…PVHINIEEIR (69 aa).

Belongs to the universal ribosomal protein uS3 family. Part of the 30S ribosomal subunit. Forms a tight complex with proteins S10 and S14.

In terms of biological role, binds the lower part of the 30S subunit head. Binds mRNA in the 70S ribosome, positioning it for translation. In Pseudomonas putida (strain ATCC 700007 / DSM 6899 / JCM 31910 / BCRC 17059 / LMG 24140 / F1), this protein is Small ribosomal subunit protein uS3.